Reading from the N-terminus, the 278-residue chain is Small ribosomal subunit protein uS2 (278 aa).

The tract at residues 233-258 (IDMEAAGEAPANKGKKKSAKARLDKS) is disordered.

It belongs to the universal ribosomal protein uS2 family.

This chain is Small ribosomal subunit protein uS2, found in Bacteroides fragilis (strain ATCC 25285 / DSM 2151 / CCUG 4856 / JCM 11019 / LMG 10263 / NCTC 9343 / Onslow / VPI 2553 / EN-2).